We begin with the raw amino-acid sequence, 288 residues long: MSNKQHRVPDFYCSYLLRSIPKPNSFYIGSSPDPVRRLRQHNGAVRRGGAYRTKRNGTRPWKMVCFIYGFTSKIAALQFEHAWQHSYKTRFIENNERLVTKKNTRNGIATKLGNARLLMKHPYFDKMNLHIRFFDRLAWESWELNKFKVDYGLSLCEVDEAVLTDESQLDELDELNLERIKAFYEDQMAQESSLLQRYQDNLTYDQKSCMICDKKIDYIHDEGTQMVGFCSDDECDFLSCLSCLYKEFTKNSKQIIPKSGHCPNCHKCLEWSQIVKYSTVLREKLIKD.

One can recognise a GIY-YIG domain in the interval 10-93 (DFYCSYLLRS…QHSYKTRFIE (84 aa)). An SLX1-type zinc finger spans residues 209-265 (CMICDKKIDYIHDEGTQMVGFCSDDECDFLSCLSCLYKEFTKNSKQIIPKSGHCPNC).

Belongs to the SLX1 family. In terms of assembly, forms a heterodimer with SLX4. A divalent metal cation is required as a cofactor.

The protein localises to the nucleus. Functionally, catalytic subunit of the SLX1-SLX4 structure-specific endonuclease that resolves DNA secondary structures generated during DNA repair and recombination. Has endonuclease activity towards branched DNA substrates, introducing single-strand cuts in duplex DNA close to junctions with ss-DNA. This chain is Structure-specific endonuclease subunit SLX1, found in Kluyveromyces lactis (strain ATCC 8585 / CBS 2359 / DSM 70799 / NBRC 1267 / NRRL Y-1140 / WM37) (Yeast).